Here is a 520-residue protein sequence, read N- to C-terminus: Catalase easC (520 aa).

The active site involves histidine 71. A heme-binding site is contributed by tyrosine 361.

This sequence belongs to the catalase family. Heme serves as cofactor.

It functions in the pathway alkaloid biosynthesis; ergot alkaloid biosynthesis. Catalase; part of the gene cluster that mediates the biosynthesis of fumiclavanine C, a fungal ergot alkaloid. DmaW catalyzes the first step of ergot alkaloid biosynthesis by condensing dimethylallyl diphosphate (DMAP) and tryptophan to form 4-dimethylallyl-L-tryptophan. The second step is catalyzed by the methyltransferase easF that methylates 4-dimethylallyl-L-tryptophan in the presence of S-adenosyl-L-methionine, resulting in the formation of 4-dimethylallyl-L-abrine. The catalase easC and the FAD-dependent oxidoreductase easE then transform 4-dimethylallyl-L-abrine to chanoclavine-I which is further oxidized by EasD in the presence of NAD(+), resulting in the formation of chanoclavine-I aldehyde. EasA reduces chanoclavine-I aldehyde to dihydrochanoclavine-I aldehyde that spontaneously dehydrates to form 6,8-dimethyl-6,7-didehydroergoline. EasG then catalyzes the reduction of 6,8-dimethyl-6,7-didehydroergoline to form festuclavine. Hydrolysis of festuclavine by easM then leads to the formation of fumigaclavine B which is in turn acetylated by easN to fumigaclavine A. Finally, easL catalyzes the conversion of fumigaclavine A into fumigaclavine C by attaching a dimethylallyl moiety to C-2 of the indole nucleus. In Aspergillus fumigatus (strain ATCC MYA-4609 / CBS 101355 / FGSC A1100 / Af293) (Neosartorya fumigata), this protein is Catalase easC.